Reading from the N-terminus, the 755-residue chain is MANGLKFSPRKTALALAVAVVCAWQSPVFAHGSEAHMVPLDKTLQEFGADVQWDDYAQMFTLIKDGAYVKVKPGAKTAIVNGKSLDLPVPVVMKEGKAWVSDTFINDVFQSGLDQTFQVEKRPHPLNSLSAAEISKAVTIVKAAPEFQPNTRFTEISLHEPDKAAVWAFALQGTPVDAPRTADVVMLDGKHVIEAVVDLQNKKILSWTPIKGAHGMVLLDDFVSVQNIINTSSEFAEVLKKHGITDPGKVVTTPLTVGFFDGKDGLQQDARLLKVVSYLDTGDGNYWAHPIENLVAVVDLEAKKIIKIEEGPVIPVPMEPRPYDGRDRNAPAVKPLEITEPEGKNYTITGDTIHWQNWDFHLRLNSRVGPILSTVTYNDNGTKRQVMYEGSLGGMIVPYGDPDVGWYFKAYLDSGDYGMGTLTSPIVRGKDAPSNAVLLDETIADYTGKPTTIPGAVAIFERYAGPEYKHLEMGKPNVSTERRELVVRWISTVGNYDYIFDWVFHDNGTIGIDAGATGIEAVKGVLAKTMHDPSAKEDTRYGTLIDHNIVGTTHQHIYNFRLDLDVDGENNTLVAMDPEVKPNTAGGPRTSTMQVNQYTIDSEQKAAQKFDPGTIRLLSNTSKENRMGNPVSYQIIPYAGGTHPAATGAKFAPDEWIYHRLSFMDKQLWVTRYHPTERYPEGKYPNRSAHDTGLGQYAKDDESLTNHDDVVWITTGTTHVARAEEWPIMPTEWALALLKPWNFFDETPTLGEKKK.

A signal peptide spans 1–30 (MANGLKFSPRKTALALAVAVVCAWQSPVFA). Substrate-binding positions include 411–422 (YLDSGDYGMGTL) and 493–498 (VGNYDY). Aspartate 413 acts as the Proton acceptor in catalysis. Tyrosine 496 (schiff-base intermediate with substrate; via topaquinone) is an active-site residue. Tyrosine 496 is subject to 2',4',5'-topaquinone. The Cu cation site is built by histidine 554 and histidine 556. Ca(2+)-binding residues include aspartate 563, leucine 564, aspartate 565, glutamate 603, tyrosine 697, aspartate 700, glutamate 702, and aspartate 708. Mn(2+) is bound at residue aspartate 563. Residue aspartate 565 participates in Mn(2+) binding. Residue aspartate 708 participates in Mn(2+) binding. Histidine 719 is a Cu cation binding site.

The protein belongs to the copper/topaquinone oxidase family. In terms of assembly, homodimer. Cu cation is required as a cofactor. Zn(2+) serves as cofactor. It depends on Ca(2+) as a cofactor. The cofactor is L-topaquinone. Requires Mn(2+) as cofactor. Topaquinone (TPQ) is generated by copper-dependent autoxidation of a specific tyrosyl residue.

The protein localises to the periplasm. It catalyses the reaction a primary methyl amine + O2 + H2O = an aldehyde + H2O2 + NH4(+). Active on tyramine, tryptamine, beta-phenethylamine and dopamine. In Klebsiella aerogenes (Enterobacter aerogenes), this protein is Primary amine oxidase (maoA).